Reading from the N-terminus, the 141-residue chain is Hemoglobin subunit alpha (141 aa).

Residues 1–141 (VLSPADKTNV…VSTVLTSKYR (141 aa)) form the Globin domain. At Ser3 the chain carries Phosphoserine. The residue at position 7 (Lys7) is an N6-succinyllysine. Thr8 carries the post-translational modification Phosphothreonine. The residue at position 11 (Lys11) is an N6-succinyllysine. Lys16 is modified (N6-acetyllysine; alternate). Lys16 is modified (N6-succinyllysine; alternate). Tyr24 is subject to Phosphotyrosine. Phosphoserine is present on Ser35. An N6-succinyllysine modification is found at Lys40. Ser49 carries the phosphoserine modification. His58 contributes to the O2 binding site. His87 contacts heme b. Ser102 carries the phosphoserine modification. Position 108 is a phosphothreonine (Thr108). Residues Ser124 and Ser131 each carry the phosphoserine modification. 2 positions are modified to phosphothreonine: Thr134 and Thr137. Ser138 is modified (phosphoserine).

The protein belongs to the globin family. Heterotetramer of two alpha chains and two beta chains. In terms of tissue distribution, red blood cells.

Involved in oxygen transport from the lung to the various peripheral tissues. Its function is as follows. Hemopressin acts as an antagonist peptide of the cannabinoid receptor CNR1. Hemopressin-binding efficiently blocks cannabinoid receptor CNR1 and subsequent signaling. This is Hemoglobin subunit alpha (HBA) from Semnopithecus entellus (Northern plains gray langur).